The chain runs to 181 residues: Putative manganese efflux pump MntP (181 aa).

6 helical membrane passes run 3-23 (LIFL…ANGA), 42-62 (IFQA…VGFI), 63-83 (SYID…KMIK), 101-121 (LMLG…TFSF), 124-144 (INIA…CVIA), and 160-180 (LVLG…THLI).

The protein belongs to the MntP (TC 9.B.29) family.

It localises to the cell inner membrane. Probably functions as a manganese efflux pump. The chain is Putative manganese efflux pump MntP from Campylobacter fetus subsp. fetus (strain 82-40).